The sequence spans 468 residues: Efflux pump azaK (468 aa).

Positions 1-30 are disordered; sequence MTVHPPAVADETSPLLPSQDGPGHNGIVPA. Helical transmembrane passes span 43–65, 80–100, 112–132, 135–155, 174–194, and 207–227; these read QVAL…FPFV, VGFY…MLMI, KPVL…FGFS, LGQM…VVTV, YFSL…GALC, and LPTV…LMFV. N-linked (GlcNAc...) asparagine glycosylation is present at Asn228. 6 helical membrane-spanning segments follow: residues 257 to 277, 296 to 316, 329 to 349, 357 to 377, 387 to 407, and 429 to 449; these read VLPV…YTAV, FYIS…LVLV, ILRG…GASV, VAFW…AMQL, VSPS…IISF, and PGFY…AFTL.

This sequence belongs to the major facilitator superfamily.

Its subcellular location is the cell membrane. Efflux pump that might be required for efficient secretion of azaphilones. This Aspergillus niger (strain ATCC 1015 / CBS 113.46 / FGSC A1144 / LSHB Ac4 / NCTC 3858a / NRRL 328 / USDA 3528.7) protein is Efflux pump azaK.